The following is a 530-amino-acid chain: Probable histone-arginine methyltransferase CARMER (530 aa).

The region spanning 141–450 is the SAM-dependent MTase PRMT-type domain; the sequence is ASQYFQFYGY…QSYDVTIDLH (310 aa). Residues Gln-154, Arg-163, Gly-187, Glu-209, Glu-238, and Thr-266 each coordinate S-adenosyl-L-methionine. Arg-501 carries the post-translational modification Asymmetric dimethylarginine; by autocatalysis.

It belongs to the class I-like SAM-binding methyltransferase superfamily. Protein arginine N-methyltransferase family. Homodimer. Interacts with EcR. Post-translationally, the dimethylated protein is the major form. Present ubiquitously (at protein level). Expressed in the imaginal disks and in larval brains, and to a much lesser degree in the polytene larval tissue such as salivary glands.

It localises to the cytoplasm. Its subcellular location is the nucleus. It carries out the reaction L-arginyl-[protein] + 2 S-adenosyl-L-methionine = N(omega),N(omega)-dimethyl-L-arginyl-[protein] + 2 S-adenosyl-L-homocysteine + 2 H(+). Methylates (mono- and asymmetric dimethylation) the guanidino nitrogens of arginyl residues in proteins. May methylate histone H3 at 'Arg-17' and activate transcription via chromatin remodeling. Coordinates ecdysone-mediated expression of cell death genes. This chain is Probable histone-arginine methyltransferase CARMER (Art4), found in Drosophila melanogaster (Fruit fly).